Here is a 466-residue protein sequence, read N- to C-terminus: MYLTIWLVSILALGTWGQKFNRFCHYNSWALSRNPQHGLVPEDIDPFLCTHLILGFAEIDESGLRLKDPNHYQQEYLYQRIVRLRRINPRLNMILSVGGWDKSQEGYSKLVSSRENILFFTKWIITYLRRHDFDGLDLDWEYPTFKGSPMGDKKKFVDLVENLAYEFDIEEIPDIKWKLTLTWTADPLESVRTSAYDIKGIASKVHNVNLKMYDFHGHWDDPLQVNHHSPLTSPNSPRNVNELAKSWVKAGVRIEKLILGIPFFGRSFTLKTANMSVPGSPAVGPGSDFGDGIPIHNLCHIIRGGTKELYLPEKKVPYIVSGSEWIGYDNPRSVMEKAQLVFNNALAGVMIYSLDMDDHHGTCGRKWPMMMAVIHGLNAYMEYIDSKHKSLELTFNKKILRARVSLRNYRRRNQQEKVAEMEQRIRHLEQELQQSMGNMAYERQQAQAMLNRGVSLPPIEQQSWSW.

The N-terminal stretch at 1–17 (MYLTIWLVSILALGTWG) is a signal peptide. In terms of domain architecture, GH18 spans 20–380 (FNRFCHYNSW…MAVIHGLNAY (361 aa)). A disulfide bridge connects residues cysteine 24 and cysteine 49. The active-site Proton donor is the glutamate 141. Residues 408–442 (NYRRRNQQEKVAEMEQRIRHLEQELQQSMGNMAYE) are a coiled coil.

This sequence belongs to the glycosyl hydrolase 18 family. In terms of tissue distribution, prismatic layer of shell (at protein level). Expressed primarily in the mantle with highest level in the mantle edge and lower level in the mantle pallium.

The protein localises to the secreted. It carries out the reaction Random endo-hydrolysis of N-acetyl-beta-D-glucosaminide (1-&gt;4)-beta-linkages in chitin and chitodextrins.. In Pinctada maxima (Silver-lipped pearl oyster), this protein is Putative chitinase.